The following is a 261-amino-acid chain: MKRLLCLLLLTTLTGCGSFLIQNPNLQENEVTSATTNVDAVEGDKEEDTGIIDTLRGRSEPISGDPAWAPIHPKEKPEHYAAATGSLFNVDHAQDMYDDTKPRGLGDIVTVMLAENTKAAKSADAELSKKNDSSMDPLQVGGQELQVGGQYNFSYELSNDNKFTGNTSANQSNSLSGSITVEVIEVLSNGNLLIRGEKWLTLNTGDEYIRLSGTIRPDDIAFDNTIASTRISNARIQYSGTGDQQDMQEPGFLARFFNVAL.

The signal sequence occupies residues 1-15; that stretch reads MKRLLCLLLLTTLTG. The N-palmitoyl cysteine moiety is linked to residue Cys16. Cys16 is lipidated: S-diacylglycerol cysteine. Over residues 121 to 133 the composition is skewed to basic and acidic residues; that stretch reads KSADAELSKKNDS. Residues 121–140 are disordered; sequence KSADAELSKKNDSSMDPLQV.

This sequence belongs to the FlgH family. In terms of assembly, the basal body constitutes a major portion of the flagellar organelle and consists of four rings (L,P,S, and M) mounted on a central rod.

It is found in the cell outer membrane. The protein localises to the bacterial flagellum basal body. Assembles around the rod to form the L-ring and probably protects the motor/basal body from shearing forces during rotation. This Aliivibrio salmonicida (strain LFI1238) (Vibrio salmonicida (strain LFI1238)) protein is Flagellar L-ring protein.